Reading from the N-terminus, the 473-residue chain is UDP-N-acetylmuramate--L-alanine ligase (473 aa).

ATP is bound at residue 119 to 125 (GTHGKTT).

Belongs to the MurCDEF family.

The protein localises to the cytoplasm. The enzyme catalyses UDP-N-acetyl-alpha-D-muramate + L-alanine + ATP = UDP-N-acetyl-alpha-D-muramoyl-L-alanine + ADP + phosphate + H(+). Its pathway is cell wall biogenesis; peptidoglycan biosynthesis. Functionally, cell wall formation. This is UDP-N-acetylmuramate--L-alanine ligase from Caulobacter vibrioides (strain NA1000 / CB15N) (Caulobacter crescentus).